The primary structure comprises 687 residues: Dictomallein (687 aa).

Disordered regions lie at residues 1–45 (MGNG…SRRL) and 73–112 (TAGG…STSA). In terms of domain architecture, Peptidase M66 spans 233–501 (PVFGTDADVQ…QAWIASRVLA (269 aa)). Histidine 393 is a binding site for Zn(2+). Glutamate 394 is a catalytic residue. Histidine 397 and histidine 403 together coordinate Zn(2+).

This sequence belongs to the dictomallein family. Requires Zn(2+) as cofactor.

This chain is Dictomallein (dtmL), found in Burkholderia mallei (strain NCTC 10247).